The sequence spans 312 residues: Methionyl-tRNA formyltransferase (312 aa).

110–113 (SLLP) lines the (6S)-5,6,7,8-tetrahydrofolate pocket.

Belongs to the Fmt family.

The catalysed reaction is L-methionyl-tRNA(fMet) + (6R)-10-formyltetrahydrofolate = N-formyl-L-methionyl-tRNA(fMet) + (6S)-5,6,7,8-tetrahydrofolate + H(+). In terms of biological role, attaches a formyl group to the free amino group of methionyl-tRNA(fMet). The formyl group appears to play a dual role in the initiator identity of N-formylmethionyl-tRNA by promoting its recognition by IF2 and preventing the misappropriation of this tRNA by the elongation apparatus. In Koribacter versatilis (strain Ellin345), this protein is Methionyl-tRNA formyltransferase.